We begin with the raw amino-acid sequence, 135 residues long: Translation initiation factor 2 subunit beta (135 aa).

The protein belongs to the eIF-2-beta/eIF-5 family. In terms of assembly, heterotrimer composed of an alpha, a beta and a gamma chain.

In terms of biological role, eIF-2 functions in the early steps of protein synthesis by forming a ternary complex with GTP and initiator tRNA. In Methanobrevibacter smithii (strain ATCC 35061 / DSM 861 / OCM 144 / PS), this protein is Translation initiation factor 2 subunit beta.